A 453-amino-acid chain; its full sequence is Tubulin delta chain (453 aa).

Position 143-149 (143-149 (AGGTGSG)) interacts with GTP.

Belongs to the tubulin family. As to quaternary structure, found in a complex with TEDC1, TEDC2, TUBE1 and TUBD1.

It is found in the nucleus. Its subcellular location is the cytoplasm. It localises to the cytoskeleton. The protein localises to the microtubule organizing center. The protein resides in the centrosome. It is found in the centriole. Its subcellular location is the cell projection. It localises to the cilium. Acts as a positive regulator of hedgehog signaling and regulates ciliary function. The chain is Tubulin delta chain (TUBD1) from Macaca fascicularis (Crab-eating macaque).